A 2169-amino-acid polypeptide reads, in one-letter code: Voltage-dependent L-type calcium channel subunit alpha-1C (2169 aa).

Topologically, residues 1–153 (MVPLVQPTTP…RACISIVEWK (153 aa)) are cytoplasmic. A calmodulin-binding region spans residues 76–97 (GAALSWQAAIDAGRQAKLMGSA). Residues 98 to 108 (GNTTISTVSST) show a composition bias toward polar residues. Residues 98–127 (GNTTISTVSSTQRKRQQYGKPKKQSGTTAT) form a disordered region. Residues 109 to 120 (QRKRQQYGKPKK) show a composition bias toward basic residues. An I repeat occupies 140–437 (NPIRRACISI…LVLGVLSGEF (298 aa)). The helical transmembrane segment at 154–172 (PFEIIILLTIFANCVALAI) threads the bilayer. At 173–187 (YIPFPEDDSNATNSN) the chain is on the extracellular side. An N-linked (GlcNAc...) asparagine glycan is attached at N182. The chain crosses the membrane as a helical span at residues 188-208 (LERVEYLFLIIFTVEAFLKVI). Residues 209–217 (AYGLLFHPN) lie on the Cytoplasmic side of the membrane. A helical membrane pass occupies residues 218 to 238 (AYLRNGWNLLDFIIVVVGLFS). Residues 239–261 (AILEQATKADGANALGGKGAGFD) are Extracellular-facing. The chain crosses the membrane as a helical span at residues 262–280 (VKALRAFRVLRPLRLVSGV). The Cytoplasmic segment spans residues 281 to 297 (PSLQVVLNSIIKAMVPL). Residues 298 to 319 (LHTALLVLFVIIIYAIIGLELF) traverse the membrane as a helical segment. Residues 320–379 (MGKMHKTCYNQEGITDVPAEEDPSPCALESGHGRQCQNGTVCKPGWDGPKHGITNFDNFA) are Extracellular-facing. A disulfide bond links C345 and C361. N357 carries N-linked (GlcNAc...) asparagine glycosylation. Residues 380 to 401 (FAMLTVFQCITMEGWTDVLYWM) constitute an intramembrane region (pore-forming). A Selectivity filter of repeat I motif is present at residues 390 to 393 (TMEG). E392 contributes to the Ca(2+) binding site. Topologically, residues 402–409 (QDAMGYEL) are extracellular. A helical transmembrane segment spans residues 410–430 (PWVYFVSLVIFGSFFVLNLVL). Topologically, residues 431-553 (GVLSGEFSKE…RKCRAAVKSN (123 aa)) are cytoplasmic. Positions 457–474 (QQLEEDLKGYLDWITQAE) are AID/alpha-interaction domain; mediates interaction with the beta subunit. The disordered stretch occupies residues 478 to 510 (PENEDEGVDEEKPRNMSMPTSETESVNTENVAG). A compositionally biased stretch (polar residues) spans 494 to 507 (SMPTSETESVNTEN). Phosphoserine is present on S498. Residue T505 is modified to Phosphothreonine. One copy of the II repeat lies at 539–785 (NRFCRRKCRA…VFLAIAVDNL (247 aa)). The chain crosses the membrane as a helical span at residues 554–572 (VFYWLVIFLVFLNTLTIAS). Topologically, residues 573–583 (EHYNQPHWLTE) are extracellular. A helical transmembrane segment spans residues 584-604 (VQDTANKALLALFTAEMLLKM). Over 605–615 (YSLGLQAYFVS) the chain is Cytoplasmic. Residues 616-635 (LFNRLDCFIVCGGILETILV) traverse the membrane as a helical segment. Topologically, residues 636 to 644 (ETKIMSPLG) are extracellular. Residues 645–663 (ISVLRCVRLLRIFKITRYW) traverse the membrane as a helical segment. The Cytoplasmic segment spans residues 664–682 (NSLSNLVASLLNSVRSIAS). Residues 683-702 (LLLLLFLFIIIFSLLGMQLF) traverse the membrane as a helical segment. The Extracellular segment spans residues 703-722 (GGKFNFDEMRTRRSTFDNFP). Positions 723-744 (QSLLTVFQILTGEDWNSVMYDG) form an intramembrane region, pore-forming. Residues 733–736 (TGED) carry the Selectivity filter of repeat II motif. E735 is a Ca(2+) binding site. At 745–754 (IMAYGGPSFP) the chain is on the extracellular side. The helical transmembrane segment at 755 to 774 (GMLVCIYFIILFICGNYILL) threads the bilayer. The Cytoplasmic segment spans residues 775–929 (NVFLAIAVDN…LQCHRIVNDT (155 aa)). The segment at 793-890 (SAQKEEEEEK…EMPVGPRPRP (98 aa)) is disordered. Residues 812-835 (SPEKKQEVVEKPAVEETKEEKIEL) are compositionally biased toward basic and acidic residues. Residues S837 and S844 each carry the phosphoserine modification. Residues 858–905 (NENEDKSPYPNPDAAGEEDEEEPEMPVGPRPRPLSELHLKEKAVPMPE) form an interaction with STAC2 region. The segment covering 872–881 (AGEEDEEEPE) has biased composition (acidic residues). An III repeat occupies 916–1198 (NRFRLQCHRI…IFVGFVIVTF (283 aa)). Residues 930 to 948 (IFTNLILFFILLSSISLAA) traverse the membrane as a helical segment. Residues 949–960 (EDPVQHTSFRNH) lie on the Extracellular side of the membrane. Residues 961-980 (ILFYFDIVFTTIFTIEIALK) form a helical membrane-spanning segment. Residues 981–996 (MTAYGAFLHKGSFCRN) lie on the Cytoplasmic side of the membrane. The chain crosses the membrane as a helical span at residues 997 to 1015 (YFNILDLLVVSVSLISFGI). The Extracellular portion of the chain corresponds to 1016 to 1022 (QSSAINV). A helical transmembrane segment spans residues 1023–1041 (VKILRVLRVLRPLRAINRA). Residues 1042-1060 (KGLKHVVQCVFVAIRTIGN) are Cytoplasmic-facing. Residues 1061 to 1080 (IVIVTTLLQFMFACIGVQLF) traverse the membrane as a helical segment. At 1081–1130 (KGKLYTCSDSSKQTEAECKGNYITYKDGEVDQPIIQPRSWENSKFDFDNV) the chain is on the extracellular side. C1087 and C1098 are disulfide-bonded. The dihydropyridine binding stretch occupies residues 1118–1207 (RSWENSKFDF…FQEQGEQEYK (90 aa)). Residues 1131–1151 (LAAMMALFTVSTFEGWPELLY) constitute an intramembrane region (pore-forming). Residues 1142 to 1145 (TFEG) carry the Selectivity filter of repeat III motif. Position 1144 (E1144) interacts with Ca(2+). Residues 1152–1168 (RSIDSHTEDKGPIYNYR) are Extracellular-facing. A helical transmembrane segment spans residues 1169–1190 (VEISIFFIIYIIIIAFFMMNIF). At 1191–1248 (VGFVIVTFQEQGEQEYKNCELDKNQRQCVEYALKARPLRRYIPKNQHQYKVWYVVNST) the chain is on the cytoplasmic side. The stretch at 1235–1508 (NQHQYKVWYV…LFVAVVMDNF (274 aa)) is one IV repeat. A helical membrane pass occupies residues 1249–1270 (YFEYLMFVLILLNTICLAMQHY). Residues 1271-1278 (GQSCLFKI) lie on the Extracellular side of the membrane. A helical transmembrane segment spans residues 1279-1300 (AMNILNMLFTGLFTVEMILKLI). Residues 1301–1310 (AFKPKHYFCD) are Cytoplasmic-facing. Residues 1311–1330 (AWNTFDALIVVGSIVDIAIT) traverse the membrane as a helical segment. The Extracellular segment spans residues 1331-1353 (EVNPAEHTQCSPSMNAEENSRIS). A helical membrane pass occupies residues 1354-1372 (ITFFRLFRVMRLVKLLSRG). The Cytoplasmic segment spans residues 1373–1390 (EGIRTLLWTFIKSFQALP). Residues 1391–1411 (YVALLIVMLFFIYAVIGMQVF) form a helical membrane-spanning segment. At 1412-1433 (GKIALNDTTEINRNNNFQTFPQ) the chain is on the extracellular side. The N-linked (GlcNAc...) asparagine glycan is linked to N1417. Residues 1434–1452 (AVLLLFRCATGEAWQDIML) constitute an intramembrane region (pore-forming). The Selectivity filter of repeat IV motif lies at 1443–1446 (TGEA). The Extracellular portion of the chain corresponds to 1453–1480 (ACMPGKKCAPESDPSNSTEGETPCGSSF). Residues 1459–1527 (KCAPESDPSN…LGPHHLDEFK (69 aa)) form a dihydropyridine binding region. C1460 and C1476 are joined by a disulfide. A glycan (N-linked (GlcNAc...) asparagine) is linked at N1468. Residues 1473–1515 (ETPCGSSFAVFYFISFYMLCAFLIINLFVAVVMDNFDYLTRDW) are phenylalkylamine binding. A helical membrane pass occupies residues 1481–1505 (AVFYFISFYMLCAFLIINLFVAVVM). Over 1506–2169 (DNFDYLTRDW…ADSRVHVRSL (664 aa)) the chain is Cytoplasmic. The tract at residues 1640 to 1667 (DEVTVGKFYATFLIQEYFRKFKKRKEQG) is important for interaction with STAC1, STAC2 and STAC3. The segment at 1646 to 1666 (KFYATFLIQEYFRKFKKRKEQ) is calmodulin-binding IQ region. The important for localization in at the junctional membrane stretch occupies residues 1680-1699 (LQAGLRTLHDIGPEIRRAIS). A phosphoserine mark is found at S1699 and S1720. Disordered stretches follow at residues 1761–1793 (KAGNNQGDTESPSHEKLVDSTFTPSSYSSTGSN) and 1894–1920 (ENRQLTPPEEDKGDTRPSPKKGFLRSA). Polar residues predominate over residues 1780–1792 (STFTPSSYSSTGS). Positions 1894–1910 (ENRQLTPPEEDKGDTRP) are enriched in basic and acidic residues. S1927 carries the phosphoserine modification.

The protein belongs to the calcium channel alpha-1 subunit (TC 1.A.1.11) family. CACNA1C subfamily. In terms of assembly, component of a calcium channel complex consisting of a pore-forming alpha subunit (CACNA1C) and ancillary beta, gamma and delta subunits. The channel complex contains alpha, beta, gamma and delta subunits in a 1:1:1:1 ratio, i.e. it contains only one of each type of subunit. CACNA1C channel activity is modulated by ancillary subunits, such as CACNB1, CACNB2, CACNB3, CACNA2D1 and CACNA2D4. Interacts with CACNB1. Interacts with CACNB2. Identified in a complex with CACNA2D4 and CACNB3. Interacts with CACNB3. Interacts with CACNA2D1. Interacts with CACNA2D4. Interacts with the gamma subunits CACNG4, CACNG6, CACNG7 and CACNG8. Interacts with CALM1. Interacts (via the N-terminus and the C-terminal C and IQ motifs) with CABP1; this inhibits Ca(2+)-dependent channel inactivation. The binding via the C motif is calcium independent whereas the binding via IQ requires the presence of calcium and is mutually exclusive with calmodulin binding. The binding to the cytoplasmic N-terminal domain is calcium independent but is essential for the channel modulation. Interacts (via C-terminal CDB motif) with CABP5; in a calcium-dependent manner. Interacts with CIB1; the interaction increases upon cardiomyocytes hypertrophy. Interacts with STAC2 and STAC3; this inhibits channel inactivation. In terms of processing, phosphorylation by PKA at Ser-1927 activates the channel. Elevated levels of blood glucose lead to increased phosphorylation by PKA. As to expression, expressed in heart. Expressed in uterus.

The protein resides in the cell membrane. It is found in the sarcolemma. The protein localises to the perikaryon. It localises to the postsynaptic density membrane. Its subcellular location is the cell projection. The protein resides in the dendrite. It is found in the T-tubule. It catalyses the reaction Ca(2+)(in) = Ca(2+)(out). Inhibited by dihydropyridines (DHP), such as isradipine. Inhibited by nifedipine. Channel activity is regulated by Ca(2+) and calmodulin. Binding of STAC1, STAC2 or STAC3 to a region that overlaps with the calmodulin binding site inhibits channel inactivation by Ca(2+) and calmodulin. Binding of calmodulin or CABP1 at the same regulatory sites results in opposite effects on the channel function. Shear stress and pressure increases calcium channel activity. In terms of biological role, pore-forming, alpha-1C subunit of the voltage-gated calcium channel that gives rise to L-type calcium currents. Mediates influx of calcium ions into the cytoplasm, and thereby triggers calcium release from the sarcoplasm. Plays an important role in excitation-contraction coupling in the heart. Required for normal heart development and normal regulation of heart rhythm. Required for normal contraction of smooth muscle cells in blood vessels and in the intestine. Essential for normal blood pressure regulation via its role in the contraction of arterial smooth muscle cells. Long-lasting (L-type) calcium channels belong to the 'high-voltage activated' (HVA) group. The chain is Voltage-dependent L-type calcium channel subunit alpha-1C (CACNA1C) from Cavia porcellus (Guinea pig).